Here is a 285-residue protein sequence, read N- to C-terminus: Acetyl-coenzyme A carboxylase carboxyl transferase subunit beta (285 aa).

The CoA carboxyltransferase N-terminal domain occupies 29 to 285 (IMTKCPKCKK…ILKIHQEVTK (257 aa)). Zn(2+) contacts are provided by cysteine 33, cysteine 36, cysteine 52, and cysteine 55. The segment at 33–55 (CPKCKKIMYTKELAENLNVCFNC) adopts a C4-type zinc-finger fold.

The protein belongs to the AccD/PCCB family. In terms of assembly, acetyl-CoA carboxylase is a heterohexamer composed of biotin carboxyl carrier protein (AccB), biotin carboxylase (AccC) and two subunits each of ACCase subunit alpha (AccA) and ACCase subunit beta (AccD). Zn(2+) is required as a cofactor.

Its subcellular location is the cytoplasm. The catalysed reaction is N(6)-carboxybiotinyl-L-lysyl-[protein] + acetyl-CoA = N(6)-biotinyl-L-lysyl-[protein] + malonyl-CoA. It functions in the pathway lipid metabolism; malonyl-CoA biosynthesis; malonyl-CoA from acetyl-CoA: step 1/1. In terms of biological role, component of the acetyl coenzyme A carboxylase (ACC) complex. Biotin carboxylase (BC) catalyzes the carboxylation of biotin on its carrier protein (BCCP) and then the CO(2) group is transferred by the transcarboxylase to acetyl-CoA to form malonyl-CoA. The polypeptide is Acetyl-coenzyme A carboxylase carboxyl transferase subunit beta (Staphylococcus aureus (strain Mu3 / ATCC 700698)).